Here is a 363-residue protein sequence, read N- to C-terminus: Peptide chain release factor 1 (363 aa).

Glutamine 237 carries the post-translational modification N5-methylglutamine. Residues 286-296 (EKRRSAEESTR) are compositionally biased toward basic and acidic residues. The segment at 286 to 305 (EKRRSAEESTRRSLVASGDR) is disordered.

The protein belongs to the prokaryotic/mitochondrial release factor family. Methylated by PrmC. Methylation increases the termination efficiency of RF1.

It is found in the cytoplasm. Peptide chain release factor 1 directs the termination of translation in response to the peptide chain termination codons UAG and UAA. In Shewanella baltica (strain OS155 / ATCC BAA-1091), this protein is Peptide chain release factor 1.